Consider the following 187-residue polypeptide: Elongation factor P (187 aa).

It belongs to the elongation factor P family.

The protein resides in the cytoplasm. It participates in protein biosynthesis; polypeptide chain elongation. Involved in peptide bond synthesis. Stimulates efficient translation and peptide-bond synthesis on native or reconstituted 70S ribosomes in vitro. Probably functions indirectly by altering the affinity of the ribosome for aminoacyl-tRNA, thus increasing their reactivity as acceptors for peptidyl transferase. The polypeptide is Elongation factor P (Helicobacter pylori (strain G27)).